Reading from the N-terminus, the 71-residue chain is uncharacterized protein (71 aa).

A helical membrane pass occupies residues 12-34 (GYLSLTLVTLPVCSSLHCYFLWT).

The protein localises to the membrane. This is an uncharacterized protein from Dictyostelium discoideum (Social amoeba).